We begin with the raw amino-acid sequence, 1203 residues long: Potassium/sodium hyperpolarization-activated cyclic nucleotide-gated channel 4 (1203 aa).

The segment at 1–182 (MDKLPPSMRK…QPASASCEQP (182 aa)) is disordered. Over 1 to 263 (MDKLPPSMRK…IIHPYSDFRF (263 aa)) the chain is Cytoplasmic. Positions 26 to 36 (MDEEEDAEEEG) are enriched in acidic residues. Positions 105–117 (SRGGGSGGTGSGS) are enriched in gly residues. The span at 121 to 133 (HLHDSAEERRLIA) shows a compositional bias: basic and acidic residues. Ser138 carries the post-translational modification Phosphoserine. Residues 163–174 (ASPPPPQQPPQP) show a composition bias toward pro residues. The interval 209 to 260 (GQAGFMQRQFGAMLQPGVNKFSLRMFGSQKAVEREQERVKSAGFWIIHPYSD) is involved in subunit assembly. The chain crosses the membrane as a helical span at residues 264 to 286 (YWDLTMLLLMVGNLIIIPVGITF). The Extracellular segment spans residues 287 to 293 (FKDENTT). A helical membrane pass occupies residues 294–314 (PWIVFNVVSDTFFLIDLVLNF). At 315-336 (RTGIVVEDNTEIILDPQRIKMK) the chain is on the cytoplasmic side. Residues 337–359 (YLKSWFMVDFISSIPVDYIFLIV) form a helical membrane-spanning segment. Over 360–378 (ETRIDSEVYKTARALRIVR) the chain is Extracellular. The chain crosses the membrane as a helical; Voltage-sensor span at residues 379-399 (FTKILSLLRLLRLSRLIRYIH). Residues 400–413 (QWEEIFHMTYDLAS) are Cytoplasmic-facing. The helical transmembrane segment at 414–436 (AVVRIVNLIGMMLLLCHWDGCLQ) threads the bilayer. At 437-464 (FLVPMLQDFPDDCWVSINNMVNNSWGKQ) the chain is on the extracellular side. A glycan (N-linked (GlcNAc...) asparagine) is linked at Asn458. The segment at residues 465–486 (YSYALFKAMSHMLCIGYGRQAP) is an intramembrane region (pore-forming). At 487–491 (VGMSD) the chain is on the extracellular side. Residues 492–517 (VWLTMLSMIVGATCYAMFIGHATALI) traverse the membrane as a helical segment. Topologically, residues 518–1203 (QSLDSSRRQY…PVRSKLPSNL (686 aa)) are cytoplasmic. 3',5'-cyclic GMP-binding residues include Tyr559, Lys562, Phe564, and Glu566. Residues Gly659, Glu660, Cys662, Arg669, Thr670, Val673, and Arg710 each contribute to the 3',5'-cyclic AMP site. Disordered stretches follow at residues 836–856 (ALGSASPASSPSQVDTPSSSS), 870–897 (GLSPLLPSSSSSPPPGACGSPSAPTPSA), and 918–1203 (LSSS…PSNL). Low complexity-rich tracts occupy residues 918 to 941 (LSSSDSPLLTPLQPGARSPQAAQP) and 966 to 986 (RSPSSSPGQLGQPPGELSLGL). A compositionally biased stretch (pro residues) spans 995–1004 (ETPPRQPEPP). Residues 1005 to 1028 (SLVAGASGGASPVGFTPRGGLSPP) are compositionally biased toward low complexity. The segment covering 1029 to 1042 (GHSPGPPRTFPSAP) has biased composition (pro residues). Low complexity predominate over residues 1045-1056 (ASGSHGSLLLPP). Residues Ser1105 and Ser1108 each carry the phosphoserine modification. Residues 1122–1137 (AGGGSGGSGSSGGLGP) show a composition bias toward gly residues.

It belongs to the potassium channel HCN family. In terms of assembly, homotetramer. The channel assemble into homotetramers or heteromeric complexes that contains of four pore-forming subunits. Interacts with PEX5L with a 4:4 HCN4:PEX5L stoichiometry; reduces the effects of cAMP on the voltage-dependence and rate of activation. Interacts with IRAG1; regulates HCN4 channel activity. Interacts with IRAG2; regulates HCN4 channel activity. Post-translationally, S-palmitoylated. In terms of tissue distribution, highly expressed in thalamus, testis and in heart, both in ventricle and atrium. Detected at much lower levels in amygdala, substantia nigra, cerebellum and hippocampus.

It localises to the cell membrane. The catalysed reaction is K(+)(in) = K(+)(out). It catalyses the reaction Na(+)(in) = Na(+)(out). Activated by cAMP and to a lesser extent by cGMP and cCMP. cAMP binding causes a conformation change that leads to the assembly of an active tetramer and channel opening. Binding of cAMP removes a tonic inhibition conferred by cyclic nucleotide-binding domain (CNBD) on channel opening. Cyclic dinucleotides can modulate HCN4 channel; cyclic dinucleotides acting as potent antagonists of cAMP. Inhibited by extracellular Cs(+) ions. Auxiliary subunits can also regulate HCN4 channel. IRAG1 causes a gain-of-function by shifting HCN4 activation to more depolarized membrane potentials in the absence of cAMP. In contrast, IRAG2 causes a loss-of-function by inhibiting cAMP-dependent potentiation of HCN4 activation. In terms of biological role, hyperpolarization-activated ion channel that are permeable to Na(+) and K(+) ions with very slow activation and inactivation. Exhibits higher selectivity for K(+) over Na(+) ions. Contributes to the native pacemaker currents in heart (If) that regulate the rhythm of heart beat. Contributes to the native pacemaker currents in neurons (Ih). May mediate responses to sour stimuli. The chain is Potassium/sodium hyperpolarization-activated cyclic nucleotide-gated channel 4 from Homo sapiens (Human).